The sequence spans 147 residues: Small ribosomal subunit protein uS12 (147 aa).

Belongs to the universal ribosomal protein uS12 family. Part of the 30S ribosomal subunit.

Its function is as follows. With S4 and S5 plays an important role in translational accuracy. Located at the interface of the 30S and 50S subunits. In Thermofilum pendens (strain DSM 2475 / Hrk 5), this protein is Small ribosomal subunit protein uS12.